A 184-amino-acid polypeptide reads, in one-letter code: MPIMPDTWIREMATTKGMIEPFTEAQKREGVISYGLSSYGYDARVADEFKIFTNVDNAIVDPKQFDATSFVDRKTDVCIIPANSFALARTVEYFRIPRDVLVICLGKSTYARCGLIVNVTPLEPEWEGHVTLEISNTTPLPAKVYANEGLCQFLFLKGEGTCEVSYADRAGKYMRQRGVTLPRL.

DCTP-binding positions include lysine 107–arginine 112, threonine 131–glutamate 133, glutamine 152, tyrosine 166, and glutamine 176. Residue glutamate 133 is the Proton donor/acceptor of the active site.

Belongs to the dCTP deaminase family. As to quaternary structure, homotrimer.

It carries out the reaction dCTP + H2O + H(+) = dUTP + NH4(+). The protein operates within pyrimidine metabolism; dUMP biosynthesis; dUMP from dCTP (dUTP route): step 1/2. Catalyzes the deamination of dCTP to dUTP. This chain is dCTP deaminase, found in Rhodospirillum centenum (strain ATCC 51521 / SW).